Reading from the N-terminus, the 205-residue chain is Cyanate hydratase (205 aa).

Catalysis depends on residues Arg133, Glu136, and Ser159.

This sequence belongs to the cyanase family.

It catalyses the reaction cyanate + hydrogencarbonate + 3 H(+) = NH4(+) + 2 CO2. Its function is as follows. Catalyzes the reaction of cyanate with bicarbonate to produce ammonia and carbon dioxide. This Thalassiosira pseudonana (Marine diatom) protein is Cyanate hydratase.